We begin with the raw amino-acid sequence, 551 residues long: Cleavage and polyadenylation specificity factor subunit 6 (551 aa).

A necessary for interaction with NXF1 region spans residues 1–213 (MADGVDHIDI…RGRFPGAVPG (213 aa)). Residues 81 to 161 (IALYIGNLTW…QSPVVTPCNK (81 aa)) enclose the RRM domain. Residues 81-161 (IALYIGNLTW…QSPVVTPCNK (81 aa)) are necessary for interaction with NUDT21/CPSF5. A necessary for nuclear paraspeckles localization region spans residues 81 to 161 (IALYIGNLTW…QSPVVTPCNK (81 aa)). Threonine 157 bears the Phosphothreonine mark. The segment covering 169 to 180 (MQSRKTTQSGQM) has biased composition (polar residues). Disordered stretches follow at residues 169–411 (MQSR…PLSE) and 477–551 (LHGI…YRHR). Over residues 184-193 (GKAGPPGGGS) the composition is skewed to gly residues. Positions 202–206 (RGRGR) match the GAR motif. Positions 207–219 (FPGAVPGGDRFPG) are enriched in low complexity. Composition is skewed to pro residues over residues 220 to 265 (PAGP…PLAG), 285 to 366 (GQPP…PPPT), and 377 to 388 (GPPPTDPYGRPP). Residues 389–404 (PYDRGDYGPPGREMDT) show a composition bias toward basic and acidic residues. 2 positions are modified to phosphothreonine: threonine 404 and threonine 407. Residues 404-551 (TARTPLSEAE…RDREREYRHR (148 aa)) form a sufficient for nuclear speckle localization region. Positions 405–551 (ARTPLSEAEF…RDREREYRHR (147 aa)) are necessary for RNA-binding. Residues 481 to 551 (ESKSYGSGSR…RDREREYRHR (71 aa)) are necessary for interaction with SRSF3, SRSF7 and TRA2B/SFRS10. Basic and acidic residues predominate over residues 489–503 (SRRERSRERDHSRSR). Positions 490–551 (RRERSRERDH…RDREREYRHR (62 aa)) are arg/Ser-rich domain. Phosphoserine occurs at positions 494, 500, 511, 513, and 525. Over residues 504-514 (EKSRRHKSRSR) the composition is skewed to basic residues. Positions 510 to 551 (KSRSRDRHDDYYRERSRERERHRDRDRDRDRERDREREYRHR) are sufficient for nuclear targeting. The span at 515-551 (DRHDDYYRERSRERERHRDRDRDRDRERDREREYRHR) shows a compositional bias: basic and acidic residues.

It belongs to the RRM CPSF6/7 family. As to quaternary structure, component of the cleavage factor Im (CFIm) complex which is a heterotetramer composed of two subunits of NUDT21/CPSF5 and two subunits of CPSF6 or CPSF7 or a heterodimer of CPSF6 and CPSF7. The cleavage factor Im (CFIm) complex associates with the CPSF and CSTF complexes to promote the assembly of the core mRNA 3'-processing machinery. Associates with the exon junction complex (EJC). Associates with the 80S ribosome particle. Interacts (via the RRM domain) with NUDT21/CPSF5; this interaction is direct and enhances binding to RNA. Interacts (via Arg/Ser-rich domain) with FIP1L1 (preferentially via unphosphorylated form and Arg/Glu/Asp-rich domain); this interaction mediates, at least in part, the interaction between the CFIm and CPSF complexes and may be inhibited by CPSF6 hyper-phosphorylation. Interacts (via N-terminus) with NXF1; this interaction is direct. Interacts with SRSF3. Interacts with SRSF7. Interacts with SNRNP70. Interacts with TRA2B/SFRS10. Interacts with UPF1. Interacts with UPF3B. Interacts with VIRMA. Interacts (via Arg/Ser-rich domain) with TNPO3; promoting nuclear import of CPSF6 independently of its phosphorylation status. Interacts with YTHDC1. In terms of processing, phosphorylated. Phosphorylated in the Arg/Ser-rich domain by SRPK1, in vitro. Symmetrically dimethylated on arginine residues by PRMT5 in a WDR77- and CLNS1A-dependent manner. Asymmetrically dimethylated on arginine residues by PRMT1. Post-translationally, symmetrically dimethylated on arginine residues in the GAR motif by PRMT5 in a WDR77- and CLNS1A-dependent manner. Asymmetrically dimethylated on arginine residues in the GAR motif by PRMT1. As to expression, expressed in testis. Expressed in male germ cells (at protein level).

It is found in the nucleus. The protein localises to the nucleoplasm. Its subcellular location is the nucleus speckle. The protein resides in the cytoplasm. In terms of biological role, component of the cleavage factor Im (CFIm) complex that functions as an activator of the pre-mRNA 3'-end cleavage and polyadenylation processing required for the maturation of pre-mRNA into functional mRNAs. CFIm contributes to the recruitment of multiprotein complexes on specific sequences on the pre-mRNA 3'-end, so called cleavage and polyadenylation signals (pA signals). Most pre-mRNAs contain multiple pA signals, resulting in alternative cleavage and polyadenylation (APA) producing mRNAs with variable 3'-end formation. The CFIm complex acts as a key regulator of cleavage and polyadenylation site choice during APA through its binding to 5'-UGUA-3' elements localized in the 3'-untranslated region (UTR) for a huge number of pre-mRNAs. CPSF6 enhances NUDT21/CPSF5 binding to 5'-UGUA-3' elements localized upstream of pA signals and promotes RNA looping, and hence activates directly the mRNA 3'-processing machinery. Plays a role in mRNA export. The chain is Cleavage and polyadenylation specificity factor subunit 6 from Mus musculus (Mouse).